The following is a 180-amino-acid chain: Translation initiation factor IF-3 (180 aa).

This sequence belongs to the IF-3 family. Monomer.

It is found in the cytoplasm. Functionally, IF-3 binds to the 30S ribosomal subunit and shifts the equilibrium between 70S ribosomes and their 50S and 30S subunits in favor of the free subunits, thus enhancing the availability of 30S subunits on which protein synthesis initiation begins. The polypeptide is Translation initiation factor IF-3 (Escherichia coli (strain K12 / MC4100 / BW2952)).